Consider the following 627-residue polypeptide: Druantia protein DruC (627 aa).

The protein localises to the cytoplasm. Its function is as follows. Component of antiviral defense system Druantia type I, composed of DruA, DruB, DruC, DruD and DruE. Expression of Druantia in E.coli (strain MG1655) confers resistance to phage lambda, SECphi18, SECphi27 and T4. The protein is Druantia protein DruC of Escherichia coli (strain UMEA 4076-1).